Consider the following 379-residue polypeptide: Probable leucine aminopeptidase TRV_05286 (379 aa).

A signal peptide spans 1–18; it reads MKIATLAVVSAFAATAIA. The Zn(2+) site is built by His-182 and Asp-201. N-linked (GlcNAc...) asparagine glycosylation is found at Asn-202 and Asn-226. 2 residues coordinate Zn(2+): Glu-240 and Asp-267. Residues Cys-312 and Cys-316 are joined by a disulfide bond. Zn(2+) is bound at residue His-345.

This sequence belongs to the peptidase M28 family. M28E subfamily. In terms of assembly, monomer. Zn(2+) is required as a cofactor.

The protein localises to the secreted. Its function is as follows. Probable extracellular aminopeptidase which contributes to pathogenicity. The chain is Probable leucine aminopeptidase TRV_05286 from Trichophyton verrucosum (strain HKI 0517).